A 2266-amino-acid polypeptide reads, in one-letter code: MSVTLSPPGDCFTFNHVKYNNSLNKYLFYNNNLDIVLDDFDFYFNFYAKKYNVLSSFFSDRVLSALYTPMSVSEAASLALEDFCELALDKLKINPFHQLWEETLANWPVYPGTSLLDFFRTQYEIRREVAEASAEALRLKKATRADAFADEVKFLIKNGVLPHLAGDFARKIWSTGKDQKKTRTAFLVKIKKANQLKQQWNSARSLAAARAEVLREFEPSPQQIQKAIEAQLFAEKLGRKYATLTARVRAKRAAARELREKQLYQETVDLLNASLLPPMEKVEIERKYRKVRPTGANVVHQVVANPLGSLCPYMGLGAKTADVRCQATLMAGKIHAQYPRLATAIYAWVIGPAAHFECITPVRNFVKGLTFMVDFFPEEALIHELNEITTEAVCIGASMVLDEERAKLEAHAQSANCRANVFMKAMAGVKNMAKCAYTGFKTGCEEAGRSLAEGICSVMMRSFRECIAQIKTELGCAIEMVEVMIKKVKDWFYSMLEKLQCGLETLGSYAMYALAILLGCGLTSLLERCIGGQGILTKLFITGVLAAIGLQAAGGFDNLQREMVQLCTALAAGIFDIQHAGNGKYKPSWDITAEHAREDARDSNVRSIPIISGVIEALAQFGTGLCSMQSATLIEIGKIGAACHSMRMGKEALKEFCATLMYYLGRIADKVTGRETIFFDELSTLVHVDVRGWIKRAQSCMRESFHTEIGNQFFRDMVAQLVDEGQKLQIGVNGIPRKISADYSQLIGQIMKDLVELHKRTIRAGISEGRRCEPVWIYLFGQRHCGKSNFMSTLDNALAKHFNLPNTTAYRNCKDAFYSGYSGQTFFHMDDLSSVKLEPPLEAELINLVSCQEVPLNMADLADKPIYFRSPFIISSSNFEDVPAGCGVRDIEAYRARKACLVEMRRKPGVIYDPENPLLASQARFKDPMYQTLINGQTEETSWMEMDDVVTEIINISARHRSAQEKLQARYMREKALLDPLALASESFLVKEAQKVFLDFDGVELEKAGVPRPEGGHGLYVDGVLYLVNASFEFDEIPIKDGGYQRLWDSRMRKKFLPAIQRDEHLNTKSMVVTGFLRSLVNGECAVLSKDTLTASATTAQLSIFKALRLEERVYLRTLQHQLDLYSQDIPENPYCNSAWVKVLGAIGAGRDYLVQNGCGILMIAAALILILVSGWGFWKLFVGLFSGTMSLGAAITGMSAVDIKAQQSSASQEKGYRARNIPIHHRYAYARSQAGDGLLPAARLCVAIYQPGGGFVSAMQYKNKSVRMTRHQALRFKEGEQLTVIFASTGESQLIRWHKYHMREEHGSEIVTWLAPSLPALSPDLKDLFLEDKEVDLPNHFKTIGYVLRVDSTAFHYDTLDTYGAVDKTPLPLKGVVGNELYLHEIPEKIVFHYESRNDDCGMIMLCQIRGKMRVVGMLVAGKDKTSWADIMPPNSLAELKSQIDYIPEFGEACDGYFKAGYVHKSEAPTLPKKTNMVPVPESLRVPCDVPVKEPAVLTKDDPRCPIGVDPPRAALKKKFTQPMMELEQEILDEVATDILETWYDCEDHVLSDISLSVAINGIPADSEEAELENFVMKTSPGYPYFKNNRAEKLKGKHAYFEEAEDGSLQLKKGGMAAELHENLVEFTKNEVPELVVIECTKDELLPERKIKVGACRLFEIMPLHYNLFLRQKTCAFTQFLQHNRHRLPCQVGTNPYSREWGHMLNRLMRPKTNEAINCDYSGFDGLLNPQLIECIARMINRLYALSGESDVQQAQRYNMLMALVGRYAFVGQQVYKVNCGLPSGFALTVVVNSVFNEILIRYAYKKLAPAPERNRFGSTVCLLVYGDDNLISVSPSIASWFTGEAIRITLAEKKVKITDGSDKDAPTIEAKSFWELDFLKRKFLKLDNGIVQAPLDRSAIFSSLYWLTPDKSKFHESQKPSDFQGEVDVIEELLLNVNVALMELYLHNDVAEFQRVRGFYAQRLPLMVSQLRTWAFCEAFHSAQQTGMQKYDPAVVLDHMSGVDFKRFMHMSEQGNKAHFYTEMLGVSGPHYKPQEGDFIVSNQPLKPGVQGEYVPIVFGEGIGGLPTKKWVGDFGKPSQLKNSKGYLITGLLREQIEAGKRLIFMGPAPYVANNAALISFGSAHKMLIQKDALAHYRNVIPESTSGLEQYFDAPIPQASVGTFYFGDGETYTALCEYKDGKVLQYEGLPTAILNQAAKDRKVPCMVARQWKSKFTVRMACDSNMCPHHSATCANFELAFKQCWLSKCKCAGNNVSKWYGTKFS.

Topologically, residues 566-1158 (LCTALAAGIF…AGRDYLVQNG (593 aa)) are cytoplasmic. An SF3 helicase domain is found at 751 to 917 (MKDLVELHKR…PGVIYDPENP (167 aa)). 781-788 (GQRHCGKS) is an ATP binding site. A helical transmembrane segment spans residues 1159–1179 (CGILMIAAALILILVSGWGFW). The Lumenal portion of the chain corresponds to 1180–1205 (KLFVGLFSGTMSLGAAITGMSAVDIK). One can recognise a Peptidase C3 domain in the interval 1229–1438 (AYARSQAGDG…WADIMPPNSL (210 aa)). Active-site for picornain 3C-like protease activity residues include H1272, E1310, and C1402. One can recognise a RdRp catalytic domain in the interval 1715–1843 (NEAINCDYSG…SVSPSIASWF (129 aa)).

Belongs to the nepoviruses RNA1 polyprotein family. Specific enzymatic cleavages by picornain 3C-like protease in vivo yield mature proteins. Picornain 3C-like protease is autocatalytically processed. In terms of processing, VPg is uridylylated by the polymerase and is covalently linked to the 5'-end of genomic RNA. This uridylylated form acts as a nucleotide-peptide primer for the polymerase.

Its subcellular location is the host endoplasmic reticulum lumen. The protein resides in the host endoplasmic reticulum membrane. The catalysed reaction is RNA(n) + a ribonucleoside 5'-triphosphate = RNA(n+1) + diphosphate. Functionally, picornain 3C-like protease is a thiol protease that cleaves the P1 and P2 polyproteins. This is RNA1 polyprotein from Tomato black ring virus (strain MJ) (TBRV).